The chain runs to 962 residues: Protein kinase ORF73 (962 aa).

Disordered stretches follow at residues 1–28 and 62–152; these read MADRTPKRSADGLIHDAKPSKVTKNDRP and STPA…RATT. Residues 81–90 are compositionally biased toward acidic residues; it reads DSDDDDEEDN. The span at 143–152 shows a compositional bias: polar residues; sequence YDTTGRRATT. The region spanning 301 to 595 is the Protein kinase domain; that stretch reads LRAAPVLGKG…ASDLLKSPRY (295 aa). ATP contacts are provided by residues 307–315 and Lys-324; that span reads LGKGYFGTV. Asp-434 functions as the Proton acceptor in the catalytic mechanism.

The protein belongs to the protein kinase superfamily. Ser/Thr protein kinase family.

The enzyme catalyses L-seryl-[protein] + ATP = O-phospho-L-seryl-[protein] + ADP + H(+). It catalyses the reaction L-threonyl-[protein] + ATP = O-phospho-L-threonyl-[protein] + ADP + H(+). The protein is Protein kinase ORF73 (ORF73) of Ictaluridae (bullhead catfishes).